Consider the following 239-residue polypeptide: Large ribosomal subunit protein uL3 (239 aa).

2 disordered regions span residues Ser-140 to Gly-164 and Pro-211 to Ala-239. An N5-methylglutamine modification is found at Gln-151.

This sequence belongs to the universal ribosomal protein uL3 family. Part of the 50S ribosomal subunit. Forms a cluster with proteins L14 and L19. Methylated by PrmB.

One of the primary rRNA binding proteins, it binds directly near the 3'-end of the 23S rRNA, where it nucleates assembly of the 50S subunit. The protein is Large ribosomal subunit protein uL3 of Bradyrhizobium sp. (strain ORS 278).